The primary structure comprises 109 residues: C-X-C motif chemokine 13 (109 aa).

The signal sequence occupies residues 1 to 21 (MRLSTATLLLLLASCLSPGHG). 2 disulfides stabilise this stretch: cysteine 32–cysteine 59 and cysteine 34–cysteine 75.

Belongs to the intercrine alpha (chemokine CxC) family. Found in spleen (B-cell-rich zone or follicles), Peyer patches (strongest within germinal centers and extending to the mantle zone) and lymph nodes (in reticular pattern in follicles).

The protein localises to the secreted. Functionally, strongly chemotactic for B-lymphocytes, weakly for spleen monocytes and macrophages but no chemotactic activity for granulocytes. Binds to BLR1/CXCR5. May play a role in directing the migration of B-lymphocytes to follicles in secondary lymphoid organs. This chain is C-X-C motif chemokine 13 (Cxcl13), found in Mus musculus (Mouse).